The sequence spans 414 residues: CinA-like protein (414 aa).

Belongs to the CinA family.

This chain is CinA-like protein, found in Koribacter versatilis (strain Ellin345).